Consider the following 894-residue polypeptide: MEKLFVPSFPKTFLNYQTPAKVENSPELHPKSRKKNLSFTKKKEPNIIPDEQFDYLCRNGSLLEAEKALDSLFQQGSKVKRSTYLKLLESCIDSGSIHLGRILHARFGLFTEPDVFVETKLLSMYAKCGCIADARKVFDSMRERNLFTWSAMIGAYSRENRWREVAKLFRLMMKDGVLPDDFLFPKILQGCANCGDVEAGKVIHSVVIKLGMSSCLRVSNSILAVYAKCGELDFATKFFRRMRERDVIAWNSVLLAYCQNGKHEEAVELVKEMEKEGISPGLVTWNILIGGYNQLGKCDAAMDLMQKMETFGITADVFTWTAMISGLIHNGMRYQALDMFRKMFLAGVVPNAVTIMSAVSACSCLKVINQGSEVHSIAVKMGFIDDVLVGNSLVDMYSKCGKLEDARKVFDSVKNKDVYTWNSMITGYCQAGYCGKAYELFTRMQDANLRPNIITWNTMISGYIKNGDEGEAMDLFQRMEKDGKVQRNTATWNLIIAGYIQNGKKDEALELFRKMQFSRFMPNSVTILSLLPACANLLGAKMVREIHGCVLRRNLDAIHAVKNALTDTYAKSGDIEYSRTIFLGMETKDIITWNSLIGGYVLHGSYGPALALFNQMKTQGITPNRGTLSSIILAHGLMGNVDEGKKVFYSIANDYHIIPALEHCSAMVYLYGRANRLEEALQFIQEMNIQSETPIWESFLTGCRIHGDIDMAIHAAENLFSLEPENTATESIVSQIYALGAKLGRSLEGNKPRRDNLLKKPLGQSWIEVRNLIHTFTTGDQSKLCTDVLYPLVEKMSRLDNRSDQYNGELWIEEEGREETCGIHSEKFAMAFGLISSSGASKTTIRILKNLRMCRDCHDTAKYVSKRYGCDILLEDTRCLHHFKNGDCSCKDYW.

18 PPR repeats span residues 80–110 (KRSTYLKLLESCIDSGSIHLGRILHARFGLF), 114–144 (DVFVETKLLSMYAKCGCIADARKVFDSMRER), 145–179 (NLFTWSAMIGAYSRENRWREVAKLFRLMMKDGVLP), 180–214 (DDFLFPKILQGCANCGDVEAGKVIHSVVIKLGMSS), 215–245 (CLRVSNSILAVYAKCGELDFATKFFRRMRER), 246–280 (DVIAWNSVLLAYCQNGKHEEAVELVKEMEKEGISP), 281–315 (GLVTWNILIGGYNQLGKCDAAMDLMQKMETFGITA), 316–350 (DVFTWTAMISGLIHNGMRYQALDMFRKMFLAGVVP), 351–385 (NAVTIMSAVSACSCLKVINQGSEVHSIAVKMGFID), 386–416 (DVLVGNSLVDMYSKCGKLEDARKVFDSVKNK), 417–451 (DVYTWNSMITGYCQAGYCGKAYELFTRMQDANLRP), 452–486 (NIITWNTMISGYIKNGDEGEAMDLFQRMEKDGKVQ), 488–522 (NTATWNLIIAGYIQNGKKDEALELFRKMQFSRFMP), 523–557 (NSVTILSLLPACANLLGAKMVREIHGCVLRRNLDA), 558–588 (IHAVKNALTDTYAKSGDIEYSRTIFLGMETK), 589–623 (DIITWNSLIGGYVLHGSYGPALALFNQMKTQGITP), 624–659 (NRGTLSSIILAHGLMGNVDEGKKVFYSIANDYHIIP), and 660–694 (ALEHCSAMVYLYGRANRLEEALQFIQEMNIQSETP). The type E motif stretch occupies residues 695-770 (IWESFLTGCR…PLGQSWIEVR (76 aa)). Positions 771-801 (NLIHTFTTGDQSKLCTDVLYPLVEKMSRLDN) are type E(+) motif. A type DYW motif region spans residues 803 to 894 (SDQYNGELWI…NGDCSCKDYW (92 aa)).

It belongs to the PPR family. PCMP-H subfamily.

The sequence is that of Pentatricopeptide repeat-containing protein At1g19720 (DYW7) from Arabidopsis thaliana (Mouse-ear cress).